A 373-amino-acid chain; its full sequence is D-alanine--D-alanine ligase A (373 aa).

In terms of domain architecture, ATP-grasp spans 146–355; it reads KRLAEFAGIP…YGELLSRLVD (210 aa). 179 to 234 lines the ATP pocket; the sequence is VEGLSLPVFVKPCNMGSSVGIHKVKTQDALEAALDDAFRYDVKVLVQQGIDAREIE. Residues D308, E322, and N324 each coordinate Mg(2+).

Belongs to the D-alanine--D-alanine ligase family. Mg(2+) serves as cofactor. Requires Mn(2+) as cofactor.

The protein resides in the cytoplasm. It catalyses the reaction 2 D-alanine + ATP = D-alanyl-D-alanine + ADP + phosphate + H(+). Its pathway is cell wall biogenesis; peptidoglycan biosynthesis. Cell wall formation. The sequence is that of D-alanine--D-alanine ligase A from Bradyrhizobium diazoefficiens (strain JCM 10833 / BCRC 13528 / IAM 13628 / NBRC 14792 / USDA 110).